The following is a 378-amino-acid chain: Transaldolase 1 (378 aa).

The active-site Schiff-base intermediate with substrate is Lys146.

Belongs to the transaldolase family. Type 2 subfamily.

It is found in the cytoplasm. It carries out the reaction D-sedoheptulose 7-phosphate + D-glyceraldehyde 3-phosphate = D-erythrose 4-phosphate + beta-D-fructose 6-phosphate. It functions in the pathway carbohydrate degradation; pentose phosphate pathway; D-glyceraldehyde 3-phosphate and beta-D-fructose 6-phosphate from D-ribose 5-phosphate and D-xylulose 5-phosphate (non-oxidative stage): step 2/3. In terms of biological role, transaldolase is important for the balance of metabolites in the pentose-phosphate pathway. In Streptomyces avermitilis (strain ATCC 31267 / DSM 46492 / JCM 5070 / NBRC 14893 / NCIMB 12804 / NRRL 8165 / MA-4680), this protein is Transaldolase 1.